We begin with the raw amino-acid sequence, 79 residues long: Sec-independent protein translocase protein TatA (79 aa).

The chain crosses the membrane as a helical span at residues 1-21; sequence MGGISIWQLLIVALIVVLLFG. A disordered region spans residues 43–79; sequence MSSEEDKKALEDTEAAKTAQTTQQATEKKPESNKEQA. Residues 46 to 57 show a composition bias toward basic and acidic residues; that stretch reads EEDKKALEDTEA. A compositionally biased stretch (low complexity) spans 58–67; sequence AKTAQTTQQA. Basic and acidic residues predominate over residues 68–79; sequence TEKKPESNKEQA.

Belongs to the TatA/E family. As to quaternary structure, the Tat system comprises two distinct complexes: a TatABC complex, containing multiple copies of TatA, TatB and TatC subunits, and a separate TatA complex, containing only TatA subunits. Substrates initially bind to the TatABC complex, which probably triggers association of the separate TatA complex to form the active translocon.

The protein localises to the cell inner membrane. Part of the twin-arginine translocation (Tat) system that transports large folded proteins containing a characteristic twin-arginine motif in their signal peptide across membranes. TatA could form the protein-conducting channel of the Tat system. The polypeptide is Sec-independent protein translocase protein TatA (Shewanella baltica (strain OS223)).